Consider the following 681-residue polypeptide: Methionine--tRNA ligase (681 aa).

A 'HIGH' region motif is present at residues 14–24 (PYANGSIHLGH). The Zn(2+) site is built by Cys-145, Cys-148, Cys-158, and Cys-161. The 'KMSKS' region signature appears at 331 to 335 (KMSKS). Lys-334 serves as a coordination point for ATP. Residues 579-681 (AFAAVDLRIA…AGAKPGQRVH (103 aa)) enclose the tRNA-binding domain.

It belongs to the class-I aminoacyl-tRNA synthetase family. MetG type 1 subfamily. In terms of assembly, homodimer. Zn(2+) serves as cofactor.

It localises to the cytoplasm. It carries out the reaction tRNA(Met) + L-methionine + ATP = L-methionyl-tRNA(Met) + AMP + diphosphate. Is required not only for elongation of protein synthesis but also for the initiation of all mRNA translation through initiator tRNA(fMet) aminoacylation. In Azotobacter vinelandii (strain DJ / ATCC BAA-1303), this protein is Methionine--tRNA ligase.